A 499-amino-acid polypeptide reads, in one-letter code: Ribose import ATP-binding protein RbsA (499 aa).

2 ABC transporter domains span residues 3-240 (VEMT…VGRA) and 250-494 (LTPG…TGGD). Residue 35-42 (GENGAGKS) coordinates ATP.

The protein belongs to the ABC transporter superfamily. Ribose importer (TC 3.A.1.2.1) family. In terms of assembly, the complex is composed of an ATP-binding protein (RbsA), two transmembrane proteins (RbsC) and a solute-binding protein (RbsB).

It localises to the cell membrane. The enzyme catalyses D-ribose(out) + ATP + H2O = D-ribose(in) + ADP + phosphate + H(+). Functionally, part of the ABC transporter complex RbsABC involved in ribose import. Responsible for energy coupling to the transport system. The sequence is that of Ribose import ATP-binding protein RbsA from Halalkalibacterium halodurans (strain ATCC BAA-125 / DSM 18197 / FERM 7344 / JCM 9153 / C-125) (Bacillus halodurans).